The primary structure comprises 252 residues: Small ribosomal subunit protein uS3 (252 aa).

Residues 39–111 (IRKLINNFAK…DVNLNVLEVK (73 aa)) form the KH type-2 domain. Residues 226 to 252 (SQSSNNPNRRPRNFKGGNNNHVNAKKN) are disordered.

The protein belongs to the universal ribosomal protein uS3 family. Part of the 30S ribosomal subunit. Forms a tight complex with proteins S10 and S14.

Its function is as follows. Binds the lower part of the 30S subunit head. Binds mRNA in the 70S ribosome, positioning it for translation. In Aster yellows witches'-broom phytoplasma (strain AYWB), this protein is Small ribosomal subunit protein uS3.